Here is a 288-residue protein sequence, read N- to C-terminus: 30 kDa spicule matrix protein (288 aa).

Residues 1–20 form the signal peptide; that stretch reads MRCFVYVLVCVVASVSYSRA. The region spanning 93 to 163 is the C-type lectin domain; sequence ANMYCGQMHP…YTNWEGMVAP (71 aa). Residue Asn-103 is glycosylated (N-linked (GlcNAc...) asparagine).

As to expression, spines and tube feet.

In terms of biological role, matrix protein of the sea urchin embryo spicule. The function of the matrix proteins is to direct crystal growth in certain orientations and inhibit growth in others. This chain is 30 kDa spicule matrix protein (SM30), found in Hemicentrotus pulcherrimus (Sea urchin).